We begin with the raw amino-acid sequence, 323 residues long: Aquaporin-2 (323 aa).

Helical transmembrane passes span 32–54 (FLAVFVLMVFTEGCSASAIFTHR), 74–96 (YVAGGVTGAFLNPAIAVAFSVLG), and 103–123 (CFCYMIAQYLGAFLASLAIYA). Residues 85-87 (NPA) carry the NPA 1 motif. Residue Asn143 is glycosylated (N-linked (GlcNAc...) asparagine). The next 2 helical transmembrane spans lie at 161-181 (GAFVDQVFGTALLIIVVLSMV) and 193-213 (FPIAIGLLIVVLDISLAYNAG). An NPA 2 motif is present at residues 217–219 (NPS). The helical transmembrane segment at 243–263 (YTWFFVPVVGSHAGAIVGAVI) threads the bilayer. Asn292 carries an N-linked (GlcNAc...) asparagine glycan.

The protein belongs to the MIP/aquaporin (TC 1.A.8) family.

It is found in the cell membrane. The catalysed reaction is H2O(in) = H2O(out). It carries out the reaction glycerol(in) = glycerol(out). In terms of biological role, aquaglyceroporin that may modulate the water content and osmolytes during anhydrobiosis. This Milnesium tardigradum (Water bear) protein is Aquaporin-2.